A 424-amino-acid polypeptide reads, in one-letter code: Glutamate-1-semialdehyde 2,1-aminomutase (424 aa).

Lys-258 carries the post-translational modification N6-(pyridoxal phosphate)lysine.

It belongs to the class-III pyridoxal-phosphate-dependent aminotransferase family. HemL subfamily. Pyridoxal 5'-phosphate serves as cofactor.

The protein localises to the cytoplasm. It carries out the reaction (S)-4-amino-5-oxopentanoate = 5-aminolevulinate. The protein operates within porphyrin-containing compound metabolism; protoporphyrin-IX biosynthesis; 5-aminolevulinate from L-glutamyl-tRNA(Glu): step 2/2. This chain is Glutamate-1-semialdehyde 2,1-aminomutase, found in Pyrobaculum neutrophilum (strain DSM 2338 / JCM 9278 / NBRC 100436 / V24Sta) (Thermoproteus neutrophilus).